We begin with the raw amino-acid sequence, 107 residues long: MKDVQRIALLFDFYGPLLTERQQELIRAYYLEDHSLAEIADADGVSRQAVHELIRRSEAALQEYEQRLGFVAEHQRRLRLLDELQEALDRADLSAARRALAALRAEA.

It belongs to the UPF0122 family.

Might take part in the signal recognition particle (SRP) pathway. This is inferred from the conservation of its genetic proximity to ftsY/ffh. May be a regulatory protein. The chain is UPF0122 protein STH1464 from Symbiobacterium thermophilum (strain DSM 24528 / JCM 14929 / IAM 14863 / T).